A 138-amino-acid polypeptide reads, in one-letter code: 16 kDa phloem protein 2 (138 aa).

Residues 1-108 enclose the C2 domain; the sequence is MGMGMMEVHL…LAEGVRKGWS (108 aa). 5 residues coordinate Ca(2+): aspartate 20, aspartate 27, aspartate 78, aspartate 80, and aspartate 86.

The cofactor is Ca(2+). In terms of tissue distribution, sieve elements of leaves, stems, roots and flowers.

Binds to both sense and antisense RNA. Interacts with mesophyll plasmodesmata to mediate its own cell-to-cell transport and potentiate RNA trafficking. The protein is 16 kDa phloem protein 2 (PP16-2) of Cucurbita maxima (Pumpkin).